Consider the following 148-residue polypeptide: Deoxyuridine 5'-triphosphate nucleotidohydrolase (148 aa).

Residues R68–G70, N81, T85–D87, and K95 contribute to the substrate site.

The protein belongs to the dUTPase family. Mg(2+) is required as a cofactor.

It catalyses the reaction dUTP + H2O = dUMP + diphosphate + H(+). It participates in pyrimidine metabolism; dUMP biosynthesis; dUMP from dCTP (dUTP route): step 2/2. Functionally, this enzyme is involved in nucleotide metabolism: it produces dUMP, the immediate precursor of thymidine nucleotides and it decreases the intracellular concentration of dUTP so that uracil cannot be incorporated into DNA. This chain is Deoxyuridine 5'-triphosphate nucleotidohydrolase, found in Caldanaerobacter subterraneus subsp. tengcongensis (strain DSM 15242 / JCM 11007 / NBRC 100824 / MB4) (Thermoanaerobacter tengcongensis).